A 588-amino-acid chain; its full sequence is Phomenoic acid biosynthesis cluster cytochrome P450 monooxygenase (588 aa).

A signal peptide spans 1 to 21; the sequence is MSFARIFITILLLFILRRAFK. Asparagine 293 is a glycosylation site (N-linked (GlcNAc...) asparagine). A compositionally biased stretch (basic and acidic residues) spans 467 to 486; sequence HQSDPDRFKPSPDAPDEKLF. The disordered stretch occupies residues 467–490; sequence HQSDPDRFKPSPDAPDEKLFRPSR. Cysteine 519 contributes to the heme binding site.

Belongs to the cytochrome P450 family. The cofactor is heme.

Its pathway is secondary metabolite biosynthesis. Functionally, cytochrome P450 monooxygenase; part of the gene cluster that mediates the biosynthesis of phomenoic acid, a long chain aliphatic carboxylic acid that does not appear to be essential for pathogenicity but may play a role in allowing to outcompete other fungi in the environmental niche via its antifungal properties. The polyketide synthase produces the long methylated aliphatic carboxylic acid chain of phomenoic acid. The cluster-specific cytochrome P450 monooxygenase may then hydroxylate the methyl group of carbon 31. The putative dehydrogenase YogA, which has no obvious role in phomenoic acid biosynthesis, may further modify phomenoic acid to produce a compound not identified yet. The sequence is that of Phomenoic acid biosynthesis cluster cytochrome P450 monooxygenase from Leptosphaeria maculans (strain JN3 / isolate v23.1.3 / race Av1-4-5-6-7-8) (Blackleg fungus).